Consider the following 201-residue polypeptide: Small ribosomal subunit protein uS4c (201 aa).

Residues 17–44 form a disordered region; that stretch reads ALPGLTNKKPRTGSDLRNQSRSGKKSQY. The S4 RNA-binding domain occupies 89-149; sequence MRLDNILFRL…DEQKSRALIQ (61 aa).

The protein belongs to the universal ribosomal protein uS4 family. As to quaternary structure, part of the 30S ribosomal subunit. Contacts protein S5. The interaction surface between S4 and S5 is involved in control of translational fidelity.

It is found in the plastid. It localises to the chloroplast. Functionally, one of the primary rRNA binding proteins, it binds directly to 16S rRNA where it nucleates assembly of the body of the 30S subunit. In terms of biological role, with S5 and S12 plays an important role in translational accuracy. The polypeptide is Small ribosomal subunit protein uS4c (rps4) (Solanum bulbocastanum (Wild potato)).